The chain runs to 395 residues: NAD(P)H-quinone oxidoreductase subunit H (395 aa).

It belongs to the complex I 49 kDa subunit family. As to quaternary structure, NDH-1 can be composed of about 15 different subunits; different subcomplexes with different compositions have been identified which probably have different functions.

It localises to the cellular thylakoid membrane. The enzyme catalyses a plastoquinone + NADH + (n+1) H(+)(in) = a plastoquinol + NAD(+) + n H(+)(out). The catalysed reaction is a plastoquinone + NADPH + (n+1) H(+)(in) = a plastoquinol + NADP(+) + n H(+)(out). In terms of biological role, NDH-1 shuttles electrons from an unknown electron donor, via FMN and iron-sulfur (Fe-S) centers, to quinones in the respiratory and/or the photosynthetic chain. The immediate electron acceptor for the enzyme in this species is believed to be plastoquinone. Couples the redox reaction to proton translocation, and thus conserves the redox energy in a proton gradient. Cyanobacterial NDH-1 also plays a role in inorganic carbon-concentration. The polypeptide is NAD(P)H-quinone oxidoreductase subunit H (Prochlorococcus marinus (strain MIT 9515)).